The chain runs to 122 residues: MKLFIILGALNAMMAVGTGAFGAHGLQGKISDHYLSVWEKATTYQMYHGLALLIIGVISGTTSINVNWAGWLIFAGIIFFSGSLYILVLTQIKVLGAITPIGGVLFIIGWIMLIIATFKFAG.

4 helical membrane-spanning segments follow: residues 3–23 (LFIILGALNAMMAVGTGAFGA), 46–66 (MYHGLALLIIGVISGTTSINV), 69–89 (AGWLIFAGIIFFSGSLYILVL), and 98–118 (ITPIGGVLFIIGWIMLIIATF).

The protein belongs to the UPF0382 family.

The protein localises to the cell membrane. The sequence is that of UPF0382 membrane protein SAUSA300_0565 from Staphylococcus aureus (strain USA300).